The following is a 317-amino-acid chain: Ribosomal protein L11 methyltransferase (317 aa).

T158, G179, D201, and N244 together coordinate S-adenosyl-L-methionine.

It belongs to the methyltransferase superfamily. PrmA family.

The protein localises to the cytoplasm. It catalyses the reaction L-lysyl-[protein] + 3 S-adenosyl-L-methionine = N(6),N(6),N(6)-trimethyl-L-lysyl-[protein] + 3 S-adenosyl-L-homocysteine + 3 H(+). Functionally, methylates ribosomal protein L11. In Lactococcus lactis subsp. cremoris (strain MG1363), this protein is Ribosomal protein L11 methyltransferase.